The sequence spans 283 residues: GTPase Era (283 aa).

Residues 7-175 (YCGHVIIVGK…KNIIKSYLPE (169 aa)) form the Era-type G domain. A G1 region spans residues 15 to 22 (GKANVGKS). 15–22 (GKANVGKS) lines the GTP pocket. Positions 41–45 (NTTQS) are G2. Residues 62-65 (DTPG) are G3. GTP is bound by residues 62 to 66 (DTPGV) and 124 to 127 (NKID). The G4 stretch occupies residues 124 to 127 (NKID). The interval 154–156 (ISA) is G5. Positions 198–283 (IREQLILFLG…HLVLWVKDKN (86 aa)) constitute a KH type-2 domain.

The protein belongs to the TRAFAC class TrmE-Era-EngA-EngB-Septin-like GTPase superfamily. Era GTPase family. Monomer.

Its subcellular location is the cytoplasm. It localises to the cell membrane. In terms of biological role, an essential GTPase that binds both GDP and GTP, with rapid nucleotide exchange. Plays a role in 16S rRNA processing and 30S ribosomal subunit biogenesis and possibly also in cell cycle regulation and energy metabolism. The protein is GTPase Era of Buchnera aphidicola subsp. Acyrthosiphon pisum (strain Tuc7).